Here is a 639-residue protein sequence, read N- to C-terminus: tRNA (uracil(54)-C(5))-methyltransferase (639 aa).

Residues 78–113 form a disordered region; sequence VPPTMKHTVDNKRLSSPLTDSGNRRTKKPKLRKYKA. Residues Ser92 and Ser93 each carry the phosphoserine modification. The segment covering 101–113 has biased composition (basic residues); that stretch reads RRTKKPKLRKYKA. The TRAM domain maps to 163–228; sequence LQYHREVKNV…PYYVESDLLD (66 aa). Gln461, Tyr496, Glu517, and Asp564 together coordinate S-adenosyl-L-methionine. The active-site Nucleophile is Cys591. Glu631 serves as the catalytic Proton acceptor.

This sequence belongs to the class I-like SAM-binding methyltransferase superfamily. RNA M5U methyltransferase family.

The catalysed reaction is uridine(54) in tRNA + S-adenosyl-L-methionine = 5-methyluridine(54) in tRNA + S-adenosyl-L-homocysteine + H(+). Its function is as follows. Catalyzes the formation of 5-methyl-uridine at position 54 (m5U54) in all tRNA. May also have a role in tRNA stabilization or maturation. The chain is tRNA (uracil(54)-C(5))-methyltransferase (TRM2) from Saccharomyces cerevisiae (strain ATCC 204508 / S288c) (Baker's yeast).